A 91-amino-acid chain; its full sequence is ATP-dependent Clp protease adapter protein ClpS (91 aa).

This sequence belongs to the ClpS family. Binds to the N-terminal domain of the chaperone ClpA.

Functionally, involved in the modulation of the specificity of the ClpAP-mediated ATP-dependent protein degradation. The sequence is that of ATP-dependent Clp protease adapter protein ClpS from Helicobacter pylori (strain ATCC 700392 / 26695) (Campylobacter pylori).